The primary structure comprises 407 residues: Peptidase T (407 aa).

H78 is a binding site for Zn(2+). The active site involves D80. Residue D141 coordinates Zn(2+). E175 serves as the catalytic Proton acceptor. Zn(2+)-binding residues include E176, D198, and H380.

The protein belongs to the peptidase M20B family. The cofactor is Zn(2+).

It is found in the cytoplasm. It catalyses the reaction Release of the N-terminal residue from a tripeptide.. Its function is as follows. Cleaves the N-terminal amino acid of tripeptides. The chain is Peptidase T from Clostridium novyi (strain NT).